Consider the following 168-residue polypeptide: CDP-archaeol synthase (168 aa).

The next 5 membrane-spanning stretches (helical) occupy residues 4 to 24 (IFEA…PVVL), 51 to 71 (GFFG…LMFP), 81 to 101 (VGVA…GSFI), 112 to 132 (PAVG…AYPL), and 138 to 158 (GEVL…NVFA).

Belongs to the CDP-archaeol synthase family. Mg(2+) serves as cofactor.

It localises to the cell membrane. It carries out the reaction 2,3-bis-O-(geranylgeranyl)-sn-glycerol 1-phosphate + CTP + H(+) = CDP-2,3-bis-O-(geranylgeranyl)-sn-glycerol + diphosphate. It functions in the pathway membrane lipid metabolism; glycerophospholipid metabolism. Functionally, catalyzes the formation of CDP-2,3-bis-(O-geranylgeranyl)-sn-glycerol (CDP-archaeol) from 2,3-bis-(O-geranylgeranyl)-sn-glycerol 1-phosphate (DGGGP) and CTP. This reaction is the third ether-bond-formation step in the biosynthesis of archaeal membrane lipids. The chain is CDP-archaeol synthase from Pyrococcus abyssi (strain GE5 / Orsay).